A 211-amino-acid chain; its full sequence is Ribosomal RNA small subunit methyltransferase G (211 aa).

S-adenosyl-L-methionine-binding positions include glycine 73, 125 to 126, and arginine 141; that span reads IE.

Belongs to the methyltransferase superfamily. RNA methyltransferase RsmG family.

It is found in the cytoplasm. It catalyses the reaction guanosine(527) in 16S rRNA + S-adenosyl-L-methionine = N(7)-methylguanosine(527) in 16S rRNA + S-adenosyl-L-homocysteine. Specifically methylates the N7 position of guanine in position 527 of 16S rRNA. This is Ribosomal RNA small subunit methyltransferase G from Methylobacterium radiotolerans (strain ATCC 27329 / DSM 1819 / JCM 2831 / NBRC 15690 / NCIMB 10815 / 0-1).